The following is a 187-amino-acid chain: Flavin prenyltransferase UbiX (187 aa).

FMN is bound by residues 9 to 11 (GAS), Ser34, and Arg123. Residues Tyr153 and Lys169 each coordinate dimethylallyl phosphate.

The protein belongs to the UbiX/PAD1 family.

It catalyses the reaction dimethylallyl phosphate + FMNH2 = prenylated FMNH2 + phosphate. In terms of biological role, flavin prenyltransferase that catalyzes the synthesis of the prenylated FMN cofactor (prenyl-FMN) for 4-hydroxy-3-polyprenylbenzoic acid decarboxylase UbiD. The prenyltransferase is metal-independent and links a dimethylallyl moiety from dimethylallyl monophosphate (DMAP) to the flavin N5 and C6 atoms of FMN. This is Flavin prenyltransferase UbiX from Helicobacter pylori (strain J99 / ATCC 700824) (Campylobacter pylori J99).